We begin with the raw amino-acid sequence, 74 residues long: Bacteriocin hiracin-JM79 (74 aa).

The first 30 residues, methionine 1–alanine 30, serve as a signal peptide directing secretion.

The protein resides in the secreted. Functionally, bacteriocin with antibacterial activity against the Gram-positive Listeria, Enterococcus, Propionibacterium, Staphylococcus and some strains of Clostridium, Lactobacillus and Pediococcus. Lacks antibacterial activity against Gram-negative bacteria. This Enterococcus hirae protein is Bacteriocin hiracin-JM79.